The sequence spans 425 residues: MEVKELERDKNRVVLEYVFGAEEIAQAEDKAVRYLNQRVEIPGFRKGRIPKNVLKMKLGEEFQEYTLDFLMDLIPDTLKDRKLILSPIVTERELKDVTARVVVEVHEEPEVRIGDISKIEVEKVDEEKVLEKYVERRIEDLRESHALLEPKEGPAEAGDLVRVNMEVYNEEEKKLTSREYEYVISEDEDRPFVKDLVGKKKGDVVEIEREYEGKKYTYKLEVEEVYKRTLPEIGDELAKSVNNEFETLEQLKESLKKEGKEIYDVEMKESMREQLLEKLPEIVEIEISDRTLEILVNEAINRLKREGRYEQIVSSYESEEKFREELKERILDDIKRDRVIEVLAQEKGISVNDEELEKEAEELAPFWGISPDRAKSLVKARQDLREELRWAILKRKVLDLLLQEVKVKVVEPKGEGDDSEGKEDN.

A PPIase FKBP-type domain is found at glycine 158–proline 231.

It belongs to the FKBP-type PPIase family. Tig subfamily.

The protein localises to the cytoplasm. It carries out the reaction [protein]-peptidylproline (omega=180) = [protein]-peptidylproline (omega=0). Its function is as follows. Involved in protein export. Acts as a chaperone by maintaining the newly synthesized protein in an open conformation. Functions as a peptidyl-prolyl cis-trans isomerase. The protein is Trigger factor of Thermotoga petrophila (strain ATCC BAA-488 / DSM 13995 / JCM 10881 / RKU-1).